The sequence spans 309 residues: L-2-keto-3-deoxyarabonate dehydratase (309 aa).

K171 serves as the catalytic Schiff-base intermediate with substrate.

The protein belongs to the DapA family. Homodimer.

The enzyme catalyses 2-dehydro-3-deoxy-L-arabinonate = 2,5-dioxopentanoate + H2O. Functionally, catalyzes the dehydration of L-2-keto-3-deoxyarabonate (L-KDA) to alpha-ketoglutaric semialdehyde (alphaKGSA). Is involved in a degradation pathway of L-arabinose that allows A.brasilense to grow on L-arabinose as a sole carbon source. This is L-2-keto-3-deoxyarabonate dehydratase (araD) from Azospirillum brasilense.